The primary structure comprises 576 residues: Proline--tRNA ligase (576 aa).

It belongs to the class-II aminoacyl-tRNA synthetase family. ProS type 1 subfamily. In terms of assembly, homodimer.

It is found in the cytoplasm. It catalyses the reaction tRNA(Pro) + L-proline + ATP = L-prolyl-tRNA(Pro) + AMP + diphosphate. Functionally, catalyzes the attachment of proline to tRNA(Pro) in a two-step reaction: proline is first activated by ATP to form Pro-AMP and then transferred to the acceptor end of tRNA(Pro). As ProRS can inadvertently accommodate and process non-cognate amino acids such as alanine and cysteine, to avoid such errors it has two additional distinct editing activities against alanine. One activity is designated as 'pretransfer' editing and involves the tRNA(Pro)-independent hydrolysis of activated Ala-AMP. The other activity is designated 'posttransfer' editing and involves deacylation of mischarged Ala-tRNA(Pro). The misacylated Cys-tRNA(Pro) is not edited by ProRS. The protein is Proline--tRNA ligase of Dechloromonas aromatica (strain RCB).